A 402-amino-acid polypeptide reads, in one-letter code: Speedy protein E21 (402 aa).

The disordered stretch occupies residues 1 to 90 (MDRTETRFRK…EPEKELAPEP (90 aa)). Residues 16-39 (GKITTSRQLHPQNEQSPQRSTSGY) show a composition bias toward polar residues. The span at 76–90 (DESEEEPEKELAPEP) shows a compositional bias: acidic residues.

The protein belongs to the Speedy/Ringo family.

This chain is Speedy protein E21, found in Homo sapiens (Human).